The primary structure comprises 601 residues: Elongation factor 4 (601 aa).

One can recognise a tr-type G domain in the interval 8-189; it reads EQIRNFGIIA…LIVRKAPPPK (182 aa). 20–25 is a GTP binding site; it reads DHGKST.

This sequence belongs to the TRAFAC class translation factor GTPase superfamily. Classic translation factor GTPase family. LepA subfamily.

The protein resides in the cell membrane. The catalysed reaction is GTP + H2O = GDP + phosphate + H(+). Required for accurate and efficient protein synthesis under certain stress conditions. May act as a fidelity factor of the translation reaction, by catalyzing a one-codon backward translocation of tRNAs on improperly translocated ribosomes. Back-translocation proceeds from a post-translocation (POST) complex to a pre-translocation (PRE) complex, thus giving elongation factor G a second chance to translocate the tRNAs correctly. Binds to ribosomes in a GTP-dependent manner. This Tropheryma whipplei (strain TW08/27) (Whipple's bacillus) protein is Elongation factor 4.